Consider the following 412-residue polypeptide: Histidine--tRNA ligase (412 aa).

It belongs to the class-II aminoacyl-tRNA synthetase family. In terms of assembly, homodimer.

It is found in the cytoplasm. It catalyses the reaction tRNA(His) + L-histidine + ATP = L-histidyl-tRNA(His) + AMP + diphosphate + H(+). The chain is Histidine--tRNA ligase from Maridesulfovibrio salexigens (strain ATCC 14822 / DSM 2638 / NCIMB 8403 / VKM B-1763) (Desulfovibrio salexigens).